We begin with the raw amino-acid sequence, 118 residues long: Large ribosomal subunit protein bL19 (118 aa).

The protein belongs to the bacterial ribosomal protein bL19 family.

Functionally, this protein is located at the 30S-50S ribosomal subunit interface and may play a role in the structure and function of the aminoacyl-tRNA binding site. The sequence is that of Large ribosomal subunit protein bL19 from Citrifermentans bemidjiense (strain ATCC BAA-1014 / DSM 16622 / JCM 12645 / Bem) (Geobacter bemidjiensis).